Here is a 157-residue protein sequence, read N- to C-terminus: SsrA-binding protein (157 aa).

Residues 138–151 are compositionally biased toward basic and acidic residues; sequence ATEAKRDWGREKQR. Residues 138-157 form a disordered region; sequence ATEAKRDWGREKQRLLKQHS.

It belongs to the SmpB family.

The protein localises to the cytoplasm. In terms of biological role, required for rescue of stalled ribosomes mediated by trans-translation. Binds to transfer-messenger RNA (tmRNA), required for stable association of tmRNA with ribosomes. tmRNA and SmpB together mimic tRNA shape, replacing the anticodon stem-loop with SmpB. tmRNA is encoded by the ssrA gene; the 2 termini fold to resemble tRNA(Ala) and it encodes a 'tag peptide', a short internal open reading frame. During trans-translation Ala-aminoacylated tmRNA acts like a tRNA, entering the A-site of stalled ribosomes, displacing the stalled mRNA. The ribosome then switches to translate the ORF on the tmRNA; the nascent peptide is terminated with the 'tag peptide' encoded by the tmRNA and targeted for degradation. The ribosome is freed to recommence translation, which seems to be the essential function of trans-translation. In Cereibacter sphaeroides (strain ATCC 17025 / ATH 2.4.3) (Rhodobacter sphaeroides), this protein is SsrA-binding protein.